The primary structure comprises 88 residues: Cell division topological specificity factor (88 aa).

It belongs to the MinE family.

In terms of biological role, prevents the cell division inhibition by proteins MinC and MinD at internal division sites while permitting inhibition at polar sites. This ensures cell division at the proper site by restricting the formation of a division septum at the midpoint of the long axis of the cell. The protein is Cell division topological specificity factor of Aeromonas hydrophila subsp. hydrophila (strain ATCC 7966 / DSM 30187 / BCRC 13018 / CCUG 14551 / JCM 1027 / KCTC 2358 / NCIMB 9240 / NCTC 8049).